The following is a 137-amino-acid chain: Proofreading thioesterase EntH (137 aa).

The Nucleophile or proton acceptor role is filled by E63.

Belongs to the thioesterase PaaI family. In terms of assembly, homotetramer. Dimer of dimers. Interacts specifically with the aryl carrier protein (ArCP) domain of EntB.

It is found in the cytoplasm. Its pathway is siderophore biosynthesis; enterobactin biosynthesis. Required for optimal enterobactin synthesis. Acts as a proofreading enzyme that prevents EntB misacylation by hydrolyzing the thioester bound existing between EntB and wrongly charged molecules. In Salmonella paratyphi A (strain AKU_12601), this protein is Proofreading thioesterase EntH.